The primary structure comprises 192 residues: LexA repressor (192 aa).

A DNA-binding region (H-T-H motif) is located at residues Arg-15–Lys-35. Residues Ser-109 and Lys-146 each act as for autocatalytic cleavage activity in the active site.

This sequence belongs to the peptidase S24 family. Homodimer.

It catalyses the reaction Hydrolysis of Ala-|-Gly bond in repressor LexA.. In terms of biological role, represses a number of genes involved in the response to DNA damage (SOS response), including recA and lexA. In the presence of single-stranded DNA, RecA interacts with LexA causing an autocatalytic cleavage which disrupts the DNA-binding part of LexA, leading to derepression of the SOS regulon and eventually DNA repair. The protein is LexA repressor of Photobacterium profundum (strain SS9).